Here is a 312-residue protein sequence, read N- to C-terminus: Probable deoxyhypusine synthase (312 aa).

Residue lysine 285 is the Nucleophile of the active site.

Belongs to the deoxyhypusine synthase family. NAD(+) serves as cofactor.

The catalysed reaction is [eIF5A protein]-L-lysine + spermidine = [eIF5A protein]-deoxyhypusine + propane-1,3-diamine. The protein operates within protein modification; eIF5A hypusination. In terms of biological role, catalyzes the NAD-dependent oxidative cleavage of spermidine and the subsequent transfer of the butylamine moiety of spermidine to the epsilon-amino group of a specific lysine residue of the eIF-5A precursor protein to form the intermediate deoxyhypusine residue. In Saccharolobus solfataricus (strain ATCC 35092 / DSM 1617 / JCM 11322 / P2) (Sulfolobus solfataricus), this protein is Probable deoxyhypusine synthase (dys).